The following is a 392-amino-acid chain: NADH dehydrogenase-like protein YjlD (392 aa).

This sequence belongs to the NADH dehydrogenase family. FAD serves as cofactor.

The polypeptide is NADH dehydrogenase-like protein YjlD (yjlD) (Bacillus subtilis (strain 168)).